Here is a 207-residue protein sequence, read N- to C-terminus: Small ribosomal subunit protein uS7y (207 aa).

The residue at position 2 (Ala2) is an N-acetylalanine.

The protein belongs to the universal ribosomal protein uS7 family. Expressed in root tips, lateral root primordia, leaf primordia, shoot apical meristem and vasculature of cotyledons.

This is Small ribosomal subunit protein uS7y from Arabidopsis thaliana (Mouse-ear cress).